The sequence spans 2860 residues: Methylcytosine dioxygenase TET (2860 aa).

Disordered regions lie at residues 51-255 (HYTT…PHLQ) and 457-562 (GQPH…DAVS). The segment covering 57-70 (HHPHSHSHPHHHYQ) has biased composition (basic residues). Low complexity-rich tracts occupy residues 71–181 (QHYP…AASG) and 191–231 (ANAN…SNGS). Residues 468 to 482 (TPTSYDGNNSNNSYP) show a composition bias toward polar residues. 2 stretches are compositionally biased toward low complexity: residues 492 to 508 (HTPH…TTTP) and 536 to 546 (SLESSAESEAS). The segment at 591–631 (SKKKRKRCGECVGCQRKDNCGECAPCRNDKSHQICKQRRCE) adopts a CXXC-type zinc-finger fold. Cys598, Cys601, Cys604, Cys610, Cys613, Cys616, Cys625, and Cys630 together coordinate Zn(2+). 7 disordered regions span residues 641 to 734 (GADG…NLQQ), 771 to 810 (QHFQ…DQPQ), 920 to 1113 (QVSA…EGYA), 1130 to 1155 (RKSD…QQTG), 1170 to 1195 (LSAN…QQVQ), 1209 to 1356 (AVGG…HSQY), and 1437 to 1460 (GYQH…IHGH). Residues 692–706 (TKANKLNAAAASATS) are compositionally biased toward low complexity. Polar residues predominate over residues 718–732 (LPQQSPNTTSATGNL). 3 stretches are compositionally biased toward low complexity: residues 771–804 (QHFQ…QIQT), 930–942 (QQQQ…QQQQ), and 985–1021 (ATNS…GTTT). Residues 1040–1054 (PNQAVPQSPTRSNML) show a composition bias toward polar residues. Positions 1076–1085 (QQQQQQQQQQ) are enriched in low complexity. Positions 1086–1097 (HLSSPPMQDWNW) are enriched in polar residues. Over residues 1141 to 1153 (LQQQPQQVQQQQQ) the composition is skewed to low complexity. Low complexity-rich tracts occupy residues 1248 to 1263 (QDAQ…QPGQ) and 1299 to 1312 (SRAA…AEAA). Pro residues predominate over residues 1337-1349 (PPHPHAAGGPPPG). Zn(2+)-binding residues include Cys1638, Cys1640, Cys1699, His1725, and Cys1727. The interaction with wds stretch occupies residues 1657–2666 (LGTASSLMDL…RMTLIFYQHR (1010 aa)). Arg1767 is a 2-oxoglutarate binding site. Zn(2+)-binding residues include Cys1777, Cys1779, Cys1795, Cys1804, and Cys1862. Residue Cys1878 coordinates 2-oxoglutarate. Position 1884 (His1884) interacts with Zn(2+). 2 residues coordinate Fe cation: His1886 and Asp1888. Asn1891 is a binding site for substrate. Residue His1919 coordinates 2-oxoglutarate. Disordered stretches follow at residues 1966–2115 (PCRR…LMSS), 2198–2229 (LTPS…PTGA), 2263–2334 (SNLT…NLTE), 2350–2371 (APLT…PPSD), 2422–2444 (MYPQ…MYGH), and 2536–2598 (LPDL…NSTK). Residues 1979-1989 (EAAPPDGDQDA) show a composition bias toward acidic residues. Low complexity-rich tracts occupy residues 1993-2015 (ANSQ…QQSS) and 2029-2059 (GNGV…STPG). Positions 2069–2086 (RCQTPVTNNPSPAGSAFS) are enriched in polar residues. Residues 2212–2229 (PPATSIAGGTTTGAPTGA) show a composition bias toward low complexity. The span at 2263-2275 (SNLTNPGGVTTEV) shows a compositional bias: polar residues. Low complexity predominate over residues 2276–2285 (QQQHQQAQQQ). The span at 2290–2304 (GGVGPGGLPVVGGAP) shows a compositional bias: gly residues. Residues 2426–2437 (QTPPPTPPPPSP) show a composition bias toward pro residues. The segment covering 2540–2562 (SNGQTNSDTVATPTPTGDSSSND) has biased composition (polar residues). The span at 2570 to 2594 (AGNQAPASGAGAATTAPPIASPGST) shows a compositional bias: low complexity. His2642 is a binding site for Fe cation. A 2-oxoglutarate-binding site is contributed by 2657 to 2659 (RMT). 2663–2665 (YQH) contacts substrate. His2673 provides a ligand contact to Zn(2+). The disordered stretch occupies residues 2729-2860 (KESSANGQQL…HQQLPQQQQT (132 aa)). The segment covering 2732–2742 (SANGQQLKNGA) has biased composition (polar residues). Basic and acidic residues predominate over residues 2750–2768 (SSDSKKSQANEQSKNEKVA). Low complexity-rich tracts occupy residues 2772 to 2785 (PTLT…LFPT) and 2798 to 2821 (NSSP…QQQH). Residues 2822–2849 (LPPPPGSGLIHPPPGTPTGTAAPPPLPT) are compositionally biased toward pro residues. A compositionally biased stretch (low complexity) spans 2850–2860 (PHQQLPQQQQT).

It belongs to the TET family. Interacts (via C-terminus) with wds (via WD repeats). The cofactor is Fe(2+). Zn(2+) serves as cofactor. Expressed in brain (at protein level).

The protein localises to the chromosome. It catalyses the reaction an N(6)-methyl-2'-deoxyadenosine in DNA + 2-oxoglutarate + O2 = a 2'-deoxyadenosine in DNA + formaldehyde + succinate + CO2. It carries out the reaction a 5-methyl-2'-deoxycytidine in DNA + 2-oxoglutarate + O2 = a 5-hydroxymethyl-2'-deoxycytidine in DNA + succinate + CO2. The catalysed reaction is a 5-hydroxymethyl-2'-deoxycytidine in DNA + 2-oxoglutarate + O2 = a 5-formyl-2'-deoxycytidine in DNA + succinate + CO2 + H2O. The enzyme catalyses a 5-formyl-2'-deoxycytidine in DNA + 2-oxoglutarate + O2 = a 5-carboxyl-2'-deoxycytidine in DNA + succinate + CO2 + H(+). Dioxygenase that specifically demethylates DNA methylated on the 6th position of adenine (N(6)-methyladenosine) DNA. N(6)-methyladenosine (m6A) DNA is present at a relatively high level at the very earliest embryonic stages but at low levels at the late embryonic stages and may act as a regulator of gene expression. Promotes differentiation of early germ cells in ovary. Contributes to neuronal morphology, development, and function in the brain. By interacting with histone modifier wds, binds to a specific set of genes, modulates intragenic (N(6)-methyladenosine) DNA levels and thereby maintains transcriptional activation. Also able to catalyze the conversion of the modified genomic base 5-methylcytosine (5mC) into 5-hydroxymethylcytosine (5hmC). In Drosophila melanogaster (Fruit fly), this protein is Methylcytosine dioxygenase TET.